Reading from the N-terminus, the 112-residue chain is ATP synthase epsilon chain (112 aa).

Belongs to the ATPase epsilon chain family. As to quaternary structure, F-type ATPases have 2 components, CF(1) - the catalytic core - and CF(0) - the membrane proton channel. CF(1) has five subunits: alpha(3), beta(3), gamma(1), delta(1), epsilon(1). CF(0) has three main subunits: a, b and c.

It localises to the cell inner membrane. Its function is as follows. Produces ATP from ADP in the presence of a proton gradient across the membrane. The chain is ATP synthase epsilon chain (atpC) from Rickettsia prowazekii (strain Madrid E).